We begin with the raw amino-acid sequence, 317 residues long: Phospholipase A1 1 (317 aa).

An N-terminal signal peptide occupies residues 1-7 (RLIMFVG). Residues 8–17 (DPSSSNELDR) constitute a propeptide that is removed on maturation. A disulfide bridge links C21 with C104. N-linked (GlcNAc...) asparagine glycosylation is present at N25. S154 acts as the Nucleophile in catalysis. The active-site Charge relay system is the D182. Cysteines 193 and 198 form a disulfide. Residue N229 is glycosylated (N-linked (GlcNAc...) asparagine). An intrachain disulfide couples C236 to C244. Catalysis depends on H246, which acts as the Charge relay system. Intrachain disulfides connect C261-C285, C262-C310, and C278-C283.

Belongs to the AB hydrolase superfamily. Lipase family. In terms of tissue distribution, expressed by the venom gland.

It localises to the secreted. The catalysed reaction is a 1,2-diacyl-sn-glycero-3-phosphocholine + H2O = a 2-acyl-sn-glycero-3-phosphocholine + a fatty acid + H(+). In terms of biological role, catalyzes the hydrolysis of phosphatidylcholine with phospholipase A1 activity. May act as an allergen and induce hemolytic activity. This Dolichovespula maculata (Bald-faced hornet) protein is Phospholipase A1 1.